A 434-amino-acid chain; its full sequence is Protein trichome birefringence-like 3 (434 aa).

The chain crosses the membrane as a helical; Signal-anchor for type II membrane protein span at residues 15–35 (IPLSIIVLVLCGFMFFILLYT). Residues 166 to 168 (GDS) carry the GDS motif motif. The short motif at 413 to 427 (DCIHWCLPGLPDTWN) is the DCXHWCLPGXXDXWN motif element.

Belongs to the PC-esterase family. TBL subfamily.

The protein resides in the golgi apparatus membrane. Involved in secondary cell wall cellulose deposition. Required for normal stem development. May act as a bridging protein that binds pectin and other cell wall polysaccharides. Probably involved in maintaining esterification of pectins. May be involved in the specific O-acetylation of cell wall polymers. The chain is Protein trichome birefringence-like 3 (TBL3) from Arabidopsis thaliana (Mouse-ear cress).